Here is a 97-residue protein sequence, read N- to C-terminus: Co-chaperonin GroES (97 aa).

The protein belongs to the GroES chaperonin family. In terms of assembly, heptamer of 7 subunits arranged in a ring. Interacts with the chaperonin GroEL.

It is found in the cytoplasm. Together with the chaperonin GroEL, plays an essential role in assisting protein folding. The GroEL-GroES system forms a nano-cage that allows encapsulation of the non-native substrate proteins and provides a physical environment optimized to promote and accelerate protein folding. GroES binds to the apical surface of the GroEL ring, thereby capping the opening of the GroEL channel. In Pseudomonas putida (strain GB-1), this protein is Co-chaperonin GroES.